Here is a 245-residue protein sequence, read N- to C-terminus: MLAHPTLDKLNTMGLTGMAKAFSELISNGESEQLSHAEWLGLLLEREWSWRYDRKLAARLRFAKLRHQAVPEDVDYRSERGLDRALFMKLIGGDWIDAHDNLAICGPSGVGKSWLACALGHKACRDDRSVLYQRVPRLFANLALARGDGRYARLQRTLGHVQLLILDDWGLEPLNEQARHDLLEILEDRYGRRSTIITSQLPVSAWHEIIGNPTYADAILDRLVHNAHRIDLSGESLRRNQRRKS.

An ATP-binding site is contributed by 106-113 (GPSGVGKS).

It belongs to the IS21/IS1162 putative ATP-binding protein family.

The polypeptide is Putative insertion sequence ATP-binding protein y4pL (Sinorhizobium fredii (strain NBRC 101917 / NGR234)).